The following is a 130-amino-acid chain: Glycine cleavage system H protein (130 aa).

The region spanning 25–106 (MALIGISDFA…PFDSWMIKVK (82 aa)) is the Lipoyl-binding domain. Lys-66 is modified (N6-lipoyllysine).

The protein belongs to the GcvH family. As to quaternary structure, the glycine cleavage system is composed of four proteins: P, T, L and H. Requires (R)-lipoate as cofactor.

The glycine cleavage system catalyzes the degradation of glycine. The H protein shuttles the methylamine group of glycine from the P protein to the T protein. This Leptospira interrogans serogroup Icterohaemorrhagiae serovar copenhageni (strain Fiocruz L1-130) protein is Glycine cleavage system H protein.